We begin with the raw amino-acid sequence, 908 residues long: Protein translocase subunit SecA (908 aa).

ATP is bound by residues Gln-87, 105-109 (GEGKT), and Asp-513. Residues 852-863 (ARRAQAQHATAE) are compositionally biased toward low complexity. Positions 852-908 (ARRAQAQHATAENQLADDEAEAASPQTVVRDERKVGRNEPCPCGSGKKYKQCHGKID) are disordered. Zn(2+) is bound by residues Cys-892, Cys-894, Cys-903, and His-904. Residues 898 to 908 (KKYKQCHGKID) show a composition bias toward basic residues.

Belongs to the SecA family. Monomer and homodimer. Part of the essential Sec protein translocation apparatus which comprises SecA, SecYEG and auxiliary proteins SecDF-YajC and YidC. The cofactor is Zn(2+).

It localises to the cell inner membrane. It is found in the cytoplasm. The enzyme catalyses ATP + H2O + cellular proteinSide 1 = ADP + phosphate + cellular proteinSide 2.. Part of the Sec protein translocase complex. Interacts with the SecYEG preprotein conducting channel. Has a central role in coupling the hydrolysis of ATP to the transfer of proteins into and across the cell membrane, serving both as a receptor for the preprotein-SecB complex and as an ATP-driven molecular motor driving the stepwise translocation of polypeptide chains across the membrane. This Vibrio atlanticus (strain LGP32) (Vibrio splendidus (strain Mel32)) protein is Protein translocase subunit SecA.